We begin with the raw amino-acid sequence, 564 residues long: Dihydroxy-acid dehydratase (564 aa).

Cysteine 55 lines the [2Fe-2S] cluster pocket. Aspartate 87 is a Mg(2+) binding site. Cysteine 128 provides a ligand contact to [2Fe-2S] cluster. Positions 129 and 130 each coordinate Mg(2+). Lysine 130 carries the N6-carboxylysine modification. Cysteine 200 lines the [2Fe-2S] cluster pocket. Glutamate 452 provides a ligand contact to Mg(2+). The active-site Proton acceptor is the serine 478.

The protein belongs to the IlvD/Edd family. Homodimer. Requires [2Fe-2S] cluster as cofactor. The cofactor is Mg(2+).

The enzyme catalyses (2R)-2,3-dihydroxy-3-methylbutanoate = 3-methyl-2-oxobutanoate + H2O. It catalyses the reaction (2R,3R)-2,3-dihydroxy-3-methylpentanoate = (S)-3-methyl-2-oxopentanoate + H2O. The protein operates within amino-acid biosynthesis; L-isoleucine biosynthesis; L-isoleucine from 2-oxobutanoate: step 3/4. Its pathway is amino-acid biosynthesis; L-valine biosynthesis; L-valine from pyruvate: step 3/4. Functions in the biosynthesis of branched-chain amino acids. Catalyzes the dehydration of (2R,3R)-2,3-dihydroxy-3-methylpentanoate (2,3-dihydroxy-3-methylvalerate) into 2-oxo-3-methylpentanoate (2-oxo-3-methylvalerate) and of (2R)-2,3-dihydroxy-3-methylbutanoate (2,3-dihydroxyisovalerate) into 2-oxo-3-methylbutanoate (2-oxoisovalerate), the penultimate precursor to L-isoleucine and L-valine, respectively. In Polaromonas sp. (strain JS666 / ATCC BAA-500), this protein is Dihydroxy-acid dehydratase.